A 165-amino-acid chain; its full sequence is MAILTMEELAERLPPYQSVAGLDLGTKTIGISVSDLGRRFATPREVIRRVKFGADAQALLSFAEKEKIAAFIIGLPVNMDGSEGPRCQATRAFVRNMGEKTDIPFVLWDERLSTVAAERVLIEMDVSRKKRAERIDSAAASFILQGALDRLASLARGASGDRDAP.

Belongs to the YqgF nuclease family.

Its subcellular location is the cytoplasm. Functionally, could be a nuclease involved in processing of the 5'-end of pre-16S rRNA. This chain is Putative pre-16S rRNA nuclease, found in Rhizobium meliloti (strain 1021) (Ensifer meliloti).